The sequence spans 598 residues: MGYERLGPSGATGSVTTSTTTAPILNQVSTSEQPENNNRRSKKKLVVSSIVLAISLILAAAIFAGVRSRLKLNQSVPGLARKPSQAISKACELTRFPELCVDSLMDFPGSLAASSSKDLIHVTVNMTLHHFSHALYSSASLSFVDMPPRARSAYDSCVELLDDSVDALSRALSSVVSSSAKPQDVTTWLSAALTNHDTCTEGFDGVDDGGVKDHMTAALQNLSELVSNCLAIFSASHDGDDFAGVPIQNRRLLGVEEREEKFPRWMRPKEREILEMPVSQIQADIIVSKDGNGTCKTISEAIKKAPQNSTRRIIIYVKAGRYEENNLKVGRKKINLMFVGDGKGKTVISGGKSIFDNITTFHTASFAATGAGFIARDITFENWAGPAKHQAVALRIGADHAVIYRCNIIGYQDTLYVHSNRQFFRECDIYGTVDFIFGNAAVVLQNCSIYARKPMDFQKNTITAQNRKDPNQNTGISIHASRVLAASDLQATNGSTQTYLGRPWKLFSRTVYMMSYIGGHVHTRGWLEWNTTFALDTLYYGEYLNSGPGSGLGQRVSWPGYRVINSTAEANRFTVAEFIYGSSWLPSTGVSFLAGLSI.

The segment at 1–40 (MGYERLGPSGATGSVTTSTTTAPILNQVSTSEQPENNNRR) is disordered. A compositionally biased stretch (low complexity) spans 7–23 (GPSGATGSVTTSTTTAP). Over residues 24-36 (ILNQVSTSEQPEN) the composition is skewed to polar residues. Residues 46–66 (VVSSIVLAISLILAAAIFAGV) form a helical membrane-spanning segment. A pectinesterase inhibitor 34 region spans residues 81-232 (RKPSQAISKA…SELVSNCLAI (152 aa)). A pectinesterase 34 region spans residues 284 to 582 (DIIVSKDGNG…FTVAEFIYGS (299 aa)). Substrate-binding residues include T360 and Q390. D413 acts as the Proton donor; for pectinesterase activity in catalysis. A disulfide bridge links C427 with C447. The Nucleophile; for pectinesterase activity role is filled by D434. The substrate site is built by R502 and W504.

This sequence in the N-terminal section; belongs to the PMEI family. It in the C-terminal section; belongs to the pectinesterase family. Expressed in siliques.

The protein resides in the membrane. The enzyme catalyses [(1-&gt;4)-alpha-D-galacturonosyl methyl ester](n) + n H2O = [(1-&gt;4)-alpha-D-galacturonosyl](n) + n methanol + n H(+). The protein operates within glycan metabolism; pectin degradation; 2-dehydro-3-deoxy-D-gluconate from pectin: step 1/5. Its function is as follows. Acts in the modification of cell walls via demethylesterification of cell wall pectin. This chain is Probable pectinesterase/pectinesterase inhibitor 34 (PME34), found in Arabidopsis thaliana (Mouse-ear cress).